A 247-amino-acid chain; its full sequence is Peroxisomal membrane protein 11A (247 aa).

Over 1–83 the chain is Cytoplasmic; that stretch reads MDAFTRFTNQ…SIHATDLVPR (83 aa). Residues 84–105 traverse the membrane as a helical segment; that stretch reads LCLTLANLNRVIYFICDTILWV. Residues 106 to 219 lie on the Lumenal side of the membrane; it reads RSVGLTSGIN…DQLGIYKSNP (114 aa). Residues 220–239 traverse the membrane as a helical segment; sequence GIIGLGGLVSSIAGMITVAY. Residues 220–239 are required for homodimerization, interaction with PEX11G, and peroxisomal localization; that stretch reads GIIGLGGLVSSIAGMITVAY. Topologically, residues 240–247 are cytoplasmic; the sequence is PQMKLKTR.

Belongs to the peroxin-11 family. Homodimer. Heterodimer with PEX11G. Probably interacts with COPB2 and COPA. Interacts with PEX19. Interacts with FIS1. Post-translationally, seems not to be N-glycosylated.

Its subcellular location is the peroxisome membrane. Its function is as follows. May be involved in peroxisomal proliferation and may regulate peroxisomes division. May mediate binding of coatomer proteins to the peroxisomal membrane. Promotes membrane protrusion and elongation on the peroxisomal surface. This is Peroxisomal membrane protein 11A (PEX11A) from Homo sapiens (Human).